Consider the following 201-residue polypeptide: UPF0301 protein R00917 (201 aa).

The protein belongs to the UPF0301 (AlgH) family.

The protein is UPF0301 protein R00917 of Rhizobium meliloti (strain 1021) (Ensifer meliloti).